We begin with the raw amino-acid sequence, 120 residues long: UPF0231 protein NT01EI_0766 (120 aa).

This sequence belongs to the UPF0231 family.

This chain is UPF0231 protein NT01EI_0766, found in Edwardsiella ictaluri (strain 93-146).